The primary structure comprises 231 residues: Ribose-5-phosphate isomerase A (231 aa).

Substrate contacts are provided by residues 32–35 (TGST), 85–88 (DGAD), and 98–101 (KGGG). Glutamate 107 serves as the catalytic Proton acceptor. Lysine 125 contributes to the substrate binding site.

This sequence belongs to the ribose 5-phosphate isomerase family. As to quaternary structure, homodimer.

It carries out the reaction aldehydo-D-ribose 5-phosphate = D-ribulose 5-phosphate. It participates in carbohydrate degradation; pentose phosphate pathway; D-ribose 5-phosphate from D-ribulose 5-phosphate (non-oxidative stage): step 1/1. Catalyzes the reversible conversion of ribose-5-phosphate to ribulose 5-phosphate. The protein is Ribose-5-phosphate isomerase A of Paraburkholderia xenovorans (strain LB400).